Consider the following 1843-residue polypeptide: MAHNEVSAAWHPALRSEDGVPSNAPVSDDLTQVSKDSMTESAAELKPSEAVIQENDLHSSSTSPDTDASVNVQSTAVPAVLDSDTPVYAEQVLNQENAQKNTAENSAQEDAPDHGQELSQTISDEPHVIETSEESAPTLGAAFGSDANGSHDTAAPDYMMDEPSPAEHDTTERREDNDAASWFNEQVDSGDRQTTNEFVNDDNQDFWGSPTNGDAGDDFFNQLKTQTKPIYIPPETESRYEEGVPLLDNTVESPVQPSMKEESQIDKIFEDDGDDEGGAFFNEVQGSVPNEGVPSPPITRKSTTQVIGSLDASPDSPVSPASSTAQEFNNILAAAASENQVKEDLSDDDLAAKWQAELSDDQPEKSTEDDLAARWQAALDDDDDLLLEDEIGKGPNNGQESLPQNPNGSVHETTQATLSSPFGTPQSSARPQAQPTSYTPHQPSTSDLLQGIPGIAPQSSAAPMQDYFAPPAQPRPTTKRAESFAERSKEGYKSPYDLPDDLTRPRKPVVTHKPVVAQPGSMPPPPRSSSIPVPPTNAPGVPTPPPAPSTVPAVTTPKNFYEELPLPPPRPRSRPASSGRYTPTANIVTSPPSHSQPPPPPPANPYASLSPPPQDSGSVGSQTQLQQPERLDPYANLLGPGAPGAPAAPSAASRYSPKPPTLQPGTKPPSAPRYSPAPPQSAAPAPPRTRYASQPSSVSSQGAVLPFQPRTSSPLAHHEKVSYQPPEGLAIRSAPESASSYAPNGMQPRPNQQDVSNSITAPVGAAGSAAVTAVPENVSAAIQPTSPPRNPYAPPAYINEFSKRVAPMASPPPAVVPPTGDAQFVPPRRSQTQSPSQQASAPGLSVPSDSLQRPASVHAPASPTKSANPYAPSQISIHNRVPSQPLEFIPPNDGQELDPLERWKGAPIVKFGFGGSITSCFPKHVPRYAAGQAAPKIKSTPGEVKIFSANDWVPITEGIVQHPGPLKNKSKKKDLVAWLSSKIAAFENEGISEAAQLHPESSKRHDEKILLWKIVRALVEHDGVLEGSAEVEKSLRYIIFPHLQNSEPESTSGVNLPAFNALPPLNAPSQSDATDSQSLESIRNSLLVGNREKAVWDAVDNRLWGHAMVIASTLDRSVWKQVVQEFVRREVKSTTGNSESLAALYEIFAGNVDESVDELVPPSARAGFQMVSKVGGQGPSKNALEGLDSWRDTLGLVLSNRSPEDHKALLALGRLLLSYGRTEAAHICFMFSRAAVFGGADDPQTSIVLLGADHQHLPLNVLQDDDAILLTEAYEYAVSVLAGSPTSTLPHLLAFKLIHACSLAEHGRKSEALQYVDAITAALNATTKPSGYHNQHLLFGVDELSARLRQTTSDSGSSWISRPSMEKVSGSMWAKFNSFVAGEDSDAASTGSGKAGDGDIGPFAKFSGTPTVSRSPSVSDFGPYSLPAAQSVPGSGPSRYQPGNQYVPNSSPEQYRGRSSLDSQRSSSFGFPFGQRRGSQEPSTPVESSMYQGGPLYGSPSAAGYQSTPPQASYMPLAPVVEDSAPQPYPVEPAPMQGSPVNISPYQPPANESFGEPLDQSSATVPASSMAGYVPPGAGGGYEPPSVEISAAPALDTTEEPTHQDVLKKKKSFMDDDDDDDLAARAAAIQKAEKARKDREADEAFRKAAEADAKRPPAAKKSWFGGWFGGAKKENDNNNNSGGPIRAKLGEENSFYYDKELKKWVNKKDPNSASVSRGTPPPPKASAPSRSASGSTAPPAASMGLGLDSRPPSSAGAPPSLSSSPAPPSLAAPPPMLGTARSASTSAAMPTPPIGSSLPPPPRPATSLSNASSIDDLLGAPQARKGTSAKGRKKGRYVDVMAK.

Disordered regions lie at residues 1–220 (MAHN…DDFF), 269–324 (FEDD…ASST), 339–769 (NQVK…AGSA), 807–872 (PMAS…PYAP), 1385–1691 (SDAA…KLGE), and 1706–1843 (NKKD…VMAK). 3 stretches are compositionally biased toward polar residues: residues 29 to 40 (DLTQVSKDSMTE), 58 to 76 (HSSS…QSTA), and 92 to 108 (VLNQ…NSAQ). Positions 165–177 (PAEHDTTERREDN) are enriched in basic and acidic residues. Residues 183-198 (FNEQVDSGDRQTTNEF) are compositionally biased toward polar residues. The span at 309-323 (SLDASPDSPVSPASS) shows a compositional bias: low complexity. The span at 362 to 372 (QPEKSTEDDLA) shows a compositional bias: basic and acidic residues. Acidic residues predominate over residues 379–389 (LDDDDDLLLED). Residues 396–448 (NNGQESLPQNPNGSVHETTQATLSSPFGTPQSSARPQAQPTSYTPHQPSTSDL) are compositionally biased toward polar residues. Positions 479–492 (KRAESFAERSKEGY) are enriched in basic and acidic residues. A compositionally biased stretch (pro residues) spans 521–549 (SMPPPPRSSSIPVPPTNAPGVPTPPPAPS). Over residues 579–589 (GRYTPTANIVT) the composition is skewed to polar residues. Residues 594 to 614 (HSQPPPPPPANPYASLSPPPQ) are compositionally biased toward pro residues. Residues 615–627 (DSGSVGSQTQLQQ) are compositionally biased toward polar residues. Low complexity predominate over residues 644–656 (GAPAAPSAASRYS). The span at 657 to 687 (PKPPTLQPGTKPPSAPRYSPAPPQSAAPAPP) shows a compositional bias: pro residues. 2 stretches are compositionally biased toward polar residues: residues 691-702 (YASQPSSVSSQG) and 749-759 (RPNQQDVSNSI). Composition is skewed to low complexity over residues 760–769 (TAPVGAAGSA) and 826–842 (PPRR…ASAP). Composition is skewed to polar residues over residues 863-872 (PTKSANPYAP), 1408-1418 (GTPTVSRSPSV), and 1441-1453 (QPGN…SSPE). Residues 1457-1468 (GRSSLDSQRSSS) are compositionally biased toward low complexity. A compositionally biased stretch (polar residues) spans 1480–1491 (QEPSTPVESSMY). Positions 1631–1655 (KAEKARKDREADEAFRKAAEADAKR) are enriched in basic and acidic residues. 2 stretches are compositionally biased toward low complexity: residues 1726–1742 (SAPS…PAAS) and 1751–1764 (PPSS…LSSS). Composition is skewed to pro residues over residues 1765–1776 (PAPPSLAAPPPM) and 1790–1804 (PTPP…PPRP).

Belongs to the SEC16 family.

It localises to the endoplasmic reticulum membrane. In terms of biological role, involved in the initiation of assembly of the COPII coat required for the formation of transport vesicles from the endoplasmic reticulum (ER) and the selection of cargo molecules. Also involved in autophagy. The sequence is that of COPII coat assembly protein sec16 (sec16) from Aspergillus oryzae (strain ATCC 42149 / RIB 40) (Yellow koji mold).